The chain runs to 346 residues: Nicotinate-nucleotide--dimethylbenzimidazole phosphoribosyltransferase (346 aa).

E313 serves as the catalytic Proton acceptor.

The protein belongs to the CobT family.

The catalysed reaction is 5,6-dimethylbenzimidazole + nicotinate beta-D-ribonucleotide = alpha-ribazole 5'-phosphate + nicotinate + H(+). The protein operates within nucleoside biosynthesis; alpha-ribazole biosynthesis; alpha-ribazole from 5,6-dimethylbenzimidazole: step 1/2. Its function is as follows. Catalyzes the synthesis of alpha-ribazole-5'-phosphate from nicotinate mononucleotide (NAMN) and 5,6-dimethylbenzimidazole (DMB). The sequence is that of Nicotinate-nucleotide--dimethylbenzimidazole phosphoribosyltransferase from Parabacteroides distasonis (strain ATCC 8503 / DSM 20701 / CIP 104284 / JCM 5825 / NCTC 11152).